A 489-amino-acid polypeptide reads, in one-letter code: Mitochondrial-processing peptidase subunit beta (489 aa).

A mitochondrion-targeting transit peptide spans 1-45 (MAAAAARVVLLPAARRRLWGFSESLLIRGAAGRSSYFGENRLRST). H101 contributes to the Zn(2+) binding site. Catalysis depends on E104, which acts as the Proton acceptor. The Zn(2+) site is built by H105 and E181.

The protein belongs to the peptidase M16 family. In terms of assembly, heterodimer of PMPCA (alpha) and PMPCB (beta) subunits, forming the mitochondrial processing protease (MPP) in which PMPCA is involved in substrate recognition and binding and PMPCB is the catalytic subunit. It depends on Zn(2+) as a cofactor.

It is found in the mitochondrion matrix. It catalyses the reaction Release of N-terminal transit peptides from precursor proteins imported into the mitochondrion, typically with Arg in position P2.. Its activity is regulated as follows. Binding to PMPCA is required for catalytic activity. In terms of biological role, catalytic subunit of the essential mitochondrial processing protease (MPP), which cleaves the mitochondrial sequence off newly imported precursors proteins. Preferentially, cleaves after an arginine at position P2. Required for PINK1 turnover by coupling PINK1 mitochondrial import and cleavage, which results in subsequent PINK1 proteolysis. This chain is Mitochondrial-processing peptidase subunit beta (PMPCB), found in Pongo abelii (Sumatran orangutan).